Reading from the N-terminus, the 76-residue chain is Large ribosomal subunit protein uL29 (76 aa).

This sequence belongs to the universal ribosomal protein uL29 family.

The sequence is that of Large ribosomal subunit protein uL29 from Gloeothece citriformis (strain PCC 7424) (Cyanothece sp. (strain PCC 7424)).